We begin with the raw amino-acid sequence, 219 residues long: Poxin (219 aa).

Residue H17 is the Proton donor of the active site. Catalysis depends on Y138, which acts as the Shared with catalytic histidine of dimeric partner. K142 (proton acceptor; shared with catalytic histidine of dimeric partner) is an active-site residue.

The protein belongs to the poxin family. In terms of assembly, homodimer.

The enzyme catalyses 2',3'-cGAMP + H2O = Gp(2'-5')Ap(3') + H(+). Functionally, nuclease that is responsible for viral evasion of host cGAS-STING innate immunity. Cleaves 2',3'-cGAMP which is produced by host cGAS following recognition of cytosolic DNA and blocks the subsequent 2',3'-cGAMP-mediated activation of TMEM173/STING, which normally spreads to adjacent cells and activates the interferon and NF-kappa-B immune responses. This chain is Poxin (OPG188), found in Bos taurus (Bovine).